Reading from the N-terminus, the 108-residue chain is ATP-dependent Clp protease adapter protein ClpS (108 aa).

Residues 1–15 (MPRESSPDSHHEHGV) are compositionally biased toward basic and acidic residues. Residues 1-24 (MPRESSPDSHHEHGVAVEPARPEV) are disordered.

This sequence belongs to the ClpS family. In terms of assembly, binds to the N-terminal domain of the chaperone ClpA.

Involved in the modulation of the specificity of the ClpAP-mediated ATP-dependent protein degradation. The polypeptide is ATP-dependent Clp protease adapter protein ClpS (Stenotrophomonas maltophilia (strain R551-3)).